Here is a 122-residue protein sequence, read N- to C-terminus: uncharacterized protein (122 aa).

This is an uncharacterized protein from Schizosaccharomyces pombe (strain 972 / ATCC 24843) (Fission yeast).